The sequence spans 250 residues: Hemocyanin, units C and D (250 aa).

H1 lines the Cu cation pocket. Positions 1–106 (HGSTKWCPSP…RAWIEPVTSA (106 aa)) are unit C. C7 and C18 form a disulfide bridge. A cross-link (2'-(S-cysteinyl)-histidine (Cys-His)) is located at residues 19-21 (CHH). Cu cation contacts are provided by H21 and H143. Residues 107-250 (VRIRKNLNDL…DAQDVIYNNH (144 aa)) form a unit D region. C149 and C160 form a disulfide bridge. The 2'-(S-cysteinyl)-histidine (Cys-His) cross-link spans 161 to 163 (CLH). H172 is a binding site for Cu cation.

It belongs to the tyrosinase family. Hemocyanin subfamily. In terms of assembly, decamers of large identical subunits (390 kDa), each containing 8 globular oxygen-binding functional units. Cu(2+) serves as cofactor.

Its function is as follows. Hemocyanins are copper-containing oxygen carriers occurring freely dissolved in the hemolymph of many mollusks and arthropods. This Sepia officinalis (Common cuttlefish) protein is Hemocyanin, units C and D.